Consider the following 462-residue polypeptide: Exodeoxyribonuclease 7 large subunit (462 aa).

This sequence belongs to the XseA family. As to quaternary structure, heterooligomer composed of large and small subunits.

Its subcellular location is the cytoplasm. It catalyses the reaction Exonucleolytic cleavage in either 5'- to 3'- or 3'- to 5'-direction to yield nucleoside 5'-phosphates.. Bidirectionally degrades single-stranded DNA into large acid-insoluble oligonucleotides, which are then degraded further into small acid-soluble oligonucleotides. The chain is Exodeoxyribonuclease 7 large subunit from Proteus mirabilis (strain HI4320).